Consider the following 118-residue polypeptide: Putative pterin-4-alpha-carbinolamine dehydratase (118 aa).

It belongs to the pterin-4-alpha-carbinolamine dehydratase family.

The enzyme catalyses (4aS,6R)-4a-hydroxy-L-erythro-5,6,7,8-tetrahydrobiopterin = (6R)-L-erythro-6,7-dihydrobiopterin + H2O. This Azotobacter vinelandii (strain DJ / ATCC BAA-1303) protein is Putative pterin-4-alpha-carbinolamine dehydratase.